Here is a 359-residue protein sequence, read N- to C-terminus: 3-dehydroquinate synthase (359 aa).

NAD(+) is bound by residues 69-74 (SGESSK), 103-107 (GVVGD), 127-128 (TT), lysine 139, lysine 148, and 166-169 (TLST). Residues glutamate 181, histidine 242, and histidine 259 each contribute to the Zn(2+) site.

This sequence belongs to the sugar phosphate cyclases superfamily. Dehydroquinate synthase family. Requires NAD(+) as cofactor. Co(2+) is required as a cofactor. It depends on Zn(2+) as a cofactor.

Its subcellular location is the cytoplasm. It carries out the reaction 7-phospho-2-dehydro-3-deoxy-D-arabino-heptonate = 3-dehydroquinate + phosphate. Its pathway is metabolic intermediate biosynthesis; chorismate biosynthesis; chorismate from D-erythrose 4-phosphate and phosphoenolpyruvate: step 2/7. Catalyzes the conversion of 3-deoxy-D-arabino-heptulosonate 7-phosphate (DAHP) to dehydroquinate (DHQ). In Oceanobacillus iheyensis (strain DSM 14371 / CIP 107618 / JCM 11309 / KCTC 3954 / HTE831), this protein is 3-dehydroquinate synthase.